The primary structure comprises 416 residues: Kelch repeat-containing protein At1g19460 (416 aa).

A compositionally biased stretch (polar residues) spans 1–11 (MANISEISGDS). The segment at 1–55 (MANISEISGDSNDGGDPNKKPEEQVLRRSRRIATRNENQNKKPKEEEEKDNRSVS) is disordered. Basic and acidic residues-rich tracts occupy residues 16-26 (DPNKKPEEQVL) and 38-52 (NQNK…KDNR). Kelch repeat units lie at residues 156–202 (EMYV…VFDG), 203–250 (KIYV…FAHA), 255–293 (KLYI…PCTM), and 294–344 (QCVI…SDGS).

This Arabidopsis thaliana (Mouse-ear cress) protein is Kelch repeat-containing protein At1g19460.